Here is a 461-residue protein sequence, read N- to C-terminus: Zinc transporter 6 (461 aa).

Residues 1-33 lie on the Cytoplasmic side of the membrane; sequence MGTIHLFRKPQRSFFGKLLQEFRLVAADRRSWK. Residues 34 to 54 form a helical membrane-spanning segment; that stretch reads ILLFGAINLTCTGFLLMWCSS. The Extracellular portion of the chain corresponds to 55–64; sequence TNSIALTAYT. The chain crosses the membrane as a helical span at residues 65–85; that stretch reads YLTIFDLFSLITCLVSYWVMM. Residues 86-98 lie on the Cytoplasmic side of the membrane; that stretch reads RKPSPAYSFGFER. A helical membrane pass occupies residues 99-119; that stretch reads LEVLAVFASTVLAQLGALFIL. The Extracellular segment spans residues 120–134; the sequence is KESAERFLEQPEIHT. Residues 135-155 form a helical membrane-spanning segment; sequence GRLLVGTFVALSFNLFTMLSI. Residues 156–200 are Cytoplasmic-facing; it reads RNKPFAYVSEAASTSWLQEHVADLSRSLCGIIPGLSSIFLPRMNP. The chain crosses the membrane as a helical span at residues 201–221; that stretch reads FVLIDLAGAFALCITYMLIEI. Residues 222–223 are Extracellular-facing; it reads NN. The chain crosses the membrane as a helical span at residues 224 to 244; that stretch reads YFAVDTASAIAIALMTFGTMY. Topologically, residues 245–461 are cytoplasmic; it reads PMSVYSGKVL…TNNRIGQPRP (217 aa). A disordered region spans residues 362–393; that stretch reads PPLKGTDDSNPVTSTPTKPSSPPPEFSFNTPG. Over residues 370-379 the composition is skewed to low complexity; sequence SNPVTSTPTK.

This sequence belongs to the cation diffusion facilitator (CDF) transporter (TC 2.A.4) family. SLC30A subfamily. As to quaternary structure, heterodimer with SLC30A5; form a functional zinc ion transmembrane transporter.

The protein localises to the golgi apparatus. Its subcellular location is the trans-Golgi network membrane. In terms of biological role, has probably no intrinsic transporter activity but together with SLC30A5 forms a functional zinc ion:proton antiporter heterodimer, mediating zinc entry into the lumen of organelles along the secretory pathway. As part of that zinc ion:proton antiporter, contributes to zinc ion homeostasis within the early secretory pathway and regulates the activation and folding of enzymes like alkaline phosphatases and enzymes involved in phosphatidylinositol glycan anchor biosynthesis. In Bos taurus (Bovine), this protein is Zinc transporter 6 (SLC30A6).